The primary structure comprises 3106 residues: Probable polyketide synthase 29 (3106 aa).

Polar residues predominate over residues 1–11 (MVQNTDNTRNS). Residues 1–20 (MVQNTDNTRNSKLIRDRNDY) are disordered. Residues 28–461 (SGDIAVIGIG…GSNVCLILSE (434 aa)) enclose the Ketosynthase family 3 (KS3) domain. Active-site for beta-ketoacyl synthase activity residues include Cys-200, His-339, and His-384. The interval 661 to 694 (GVSADIIIGHSLGEVSSPYCSGMIDFQTLCYLTY) is acyl/malonyl transferase. The active-site For acyl/malonyl transferase activity is the Ser-671. Residues 961-1082 (PSIHGLGNNT…GNFSLTKHNS (122 aa)) form an N-terminal hotdog fold region. A PKS/mFAS DH domain is found at 961–1266 (PSIHGLGNNT…CALVSLDSNP (306 aa)). Catalysis depends on His-994, which acts as the Proton acceptor; for dehydratase activity. The segment at 1099-1266 (NFTSISKQDF…CALVSLDSNP (168 aa)) is C-terminal hotdog fold. Catalysis depends on Asp-1171, which acts as the Proton donor; for dehydratase activity. The region spanning 2533 to 2610 (NNNEIIRSTI…QSIEIILSAH (78 aa)) is the Carrier domain. Ser-2570 carries the post-translational modification O-(pantetheine 4'-phosphoryl)serine. Residues 2609-2656 (AHNNNNKNNNNNNNINNNNKNNNNNNNKNNNNINNNINNNKNNNNNNN) are a coiled coil. The interval 2614-2656 (NKNNNNNNNINNNNKNNNNNNNKNNNNINNNINNNKNNNNNNN) is disordered.

Pantetheine 4'-phosphate serves as cofactor.

Probable polyketide synthase. The sequence is that of Probable polyketide synthase 29 (pks29) from Dictyostelium discoideum (Social amoeba).